Consider the following 1358-residue polypeptide: Regulatory protein SIR4 (1358 aa).

The segment covering 1–15 (MPNDNKTPNRSSTPK) has biased composition (polar residues). Disordered regions lie at residues 1-98 (MPND…PHSN), 252-277 (SLSV…SPGI), 356-466 (HDEK…PPEI), 498-544 (VQGE…ISNG), 677-726 (ASTE…EDEQ), 752-787 (VSDS…DLDT), and 913-970 (HSQE…ENLS). The span at 26–39 (KIPEREEKSNEVKT) shows a compositional bias: basic and acidic residues. Polar residues-rich tracts occupy residues 49 to 66 (KSKN…SPHQ) and 75 to 96 (HKQL…SFPH). Basic and acidic residues predominate over residues 373 to 388 (QKMKEDADLKRMEILK). Polar residues predominate over residues 428-437 (QENNYNSTSR). Positions 452–464 (KNGENKKIGKRPP) are enriched in basic and acidic residues. Residues 507–517 (RNNTLNVTPSK) show a composition bias toward polar residues. At S692 the chain carries Phosphoserine. A compositionally biased stretch (polar residues) spans 706 to 720 (FPVSLSQPSKKSFAN). Positions 754 to 766 (DSDDSSSDNDSLT) are enriched in acidic residues. A compositionally biased stretch (basic and acidic residues) spans 777–787 (NEIKVTNDLDT). Residues 916 to 932 (EQNSSSAKPSQIPTVSS) show a composition bias toward polar residues. K1128 participates in a covalent cross-link: Glycyl lysine isopeptide (Lys-Gly) (interchain with G-Cter in SUMO). Residues 1271-1347 (LSFVDIVLSK…DAKINKLMEK (77 aa)) are a coiled coil.

Homodimer. Interacts with MPS3. Interacts with RIS1. Interacts with SIR1, SIR2 and SIR3. Interacts with YKU80. Interacts with UBP10. Interacts with RAP1 (via C-terminus).

It localises to the nucleus. Functionally, the proteins SIR1 through SIR4 are required for transcriptional repression of the silent mating type loci, HML and HMR. The proteins SIR2 through SIR4 repress mulitple loci by modulating chromatin structure. Involves the compaction of chromatin fiber into a more condensed form. The polypeptide is Regulatory protein SIR4 (SIR4) (Saccharomyces cerevisiae (strain ATCC 204508 / S288c) (Baker's yeast)).